The chain runs to 367 residues: ABI gene family member 3 (367 aa).

A coiled-coil region spans residues 36 to 64 (CEDNYLQATDKRKALEETMAFTTQALASV). The disordered stretch occupies residues 163 to 273 (LSRTGTLSRK…LEVSQPPLEA (111 aa)). Over residues 206 to 225 (SAASSASSLASAGSAEGASG) the composition is skewed to low complexity. 2 positions are modified to phosphoserine: Ser-216 and Ser-219. A compositionally biased stretch (pro residues) spans 236-264 (ATPPPPPVAPVTPPPPPLSAEVFLPPPPL). The 59-residue stretch at 309–367 (SYLEKVVTLYPYTRQKDNELSFSEGTVICVTRRYSDGWCEGVSSEGTGFFPGNYVEPSC) folds into the SH3 domain. A Phosphoserine modification is found at Ser-343.

This sequence belongs to the ABI family. May interact with PAK1 and PAK2. Probably interacts with TARSH.

It localises to the cytoplasm. Its function is as follows. Inhibits ectopic tumor cell metastasis of SRD cells. In vitro, reduces cell motility. In Mus musculus (Mouse), this protein is ABI gene family member 3 (Abi3).